The chain runs to 229 residues: PKHD-type hydroxylase Nham_1514 (229 aa).

The Fe2OG dioxygenase domain occupies 78 to 180 (QIFPPLFNRY…RVASFFWLQS (103 aa)). His-98, Asp-100, and His-161 together coordinate Fe cation. Arg-171 contributes to the 2-oxoglutarate binding site.

The cofactor is Fe(2+). It depends on L-ascorbate as a cofactor.

The polypeptide is PKHD-type hydroxylase Nham_1514 (Nitrobacter hamburgensis (strain DSM 10229 / NCIMB 13809 / X14)).